The primary structure comprises 209 residues: Urease accessory protein UreG (209 aa).

18–25 (GPVGSGKT) is a binding site for GTP.

The protein belongs to the SIMIBI class G3E GTPase family. UreG subfamily. As to quaternary structure, homodimer. UreD, UreF and UreG form a complex that acts as a GTP-hydrolysis-dependent molecular chaperone, activating the urease apoprotein by helping to assemble the nickel containing metallocenter of UreC. The UreE protein probably delivers the nickel.

The protein localises to the cytoplasm. Its function is as follows. Facilitates the functional incorporation of the urease nickel metallocenter. This process requires GTP hydrolysis, probably effectuated by UreG. The polypeptide is Urease accessory protein UreG (Cupriavidus necator (strain ATCC 17699 / DSM 428 / KCTC 22496 / NCIMB 10442 / H16 / Stanier 337) (Ralstonia eutropha)).